We begin with the raw amino-acid sequence, 778 residues long: Actin-binding LIM protein 1 (778 aa).

4 LIM zinc-binding domains span residues 97–156 (IHCH…MYGT), 156–216 (TRCH…MSSS), 224–283 (SNCA…LFGV), and 283–343 (VKCE…TKTE). A Phosphoserine modification is found at Ser-216. The tract at residues 339–370 (STKTEEKLRPTRTSSESIYSRPGSSIPGSPGH) is disordered. Over residues 360–369 (PGSSIPGSPG) the composition is skewed to low complexity. Ser-367 is subject to Phosphoserine. Phosphotyrosine occurs at positions 373 and 396. Disordered stretches follow at residues 414 to 510 (YDDK…QAPK) and 552 to 597 (AAQA…EELL). Phosphoserine is present on residues Ser-422, Ser-426, and Ser-431. Residues 423 to 434 (LGESPRTLSPTP) are compositionally biased toward polar residues. Thr-433 carries the post-translational modification Phosphothreonine. The residue at position 435 (Ser-435) is a Phosphoserine. Tyr-439 bears the Phosphotyrosine mark. Over residues 449 to 474 (RSTSQGSINSPVYSRHSYTPTTSRSP) the composition is skewed to polar residues. Residues Ser-452, Ser-455, Ser-458, Ser-498, and Ser-587 each carry the phosphoserine modification. Residues 590–614 (EEDDEELLRRRQLQEEQLMKLNSGL) are a coiled coil. Lys-620 participates in a covalent cross-link: Glycyl lysine isopeptide (Lys-Gly) (interchain with G-Cter in SUMO2). Phosphoserine is present on residues Ser-640, Ser-655, Ser-677, and Ser-706. One can recognise an HP domain in the interval 710–778 (MLEPKIFPYE…NDMKKKAKLF (69 aa)).

In terms of assembly, binds F-actin. Interacts with ABRA. Detected in liver, heart, skeletal muscle, brain and retina, where it is concentrated in the inner segment and in the outer plexiform layers.

Its subcellular location is the cytoplasm. It localises to the cytoskeleton. Functionally, may act as scaffold protein. May play a role in the development of the retina. Has been suggested to play a role in axon guidance. The sequence is that of Actin-binding LIM protein 1 (ABLIM1) from Homo sapiens (Human).